The chain runs to 251 residues: 1-(5-phosphoribosyl)-5-[(5-phosphoribosylamino)methylideneamino] imidazole-4-carboxamide isomerase (251 aa).

The Proton acceptor role is filled by Asp-8. Asp-131 functions as the Proton donor in the catalytic mechanism.

This sequence belongs to the HisA/HisF family.

It is found in the cytoplasm. The catalysed reaction is 1-(5-phospho-beta-D-ribosyl)-5-[(5-phospho-beta-D-ribosylamino)methylideneamino]imidazole-4-carboxamide = 5-[(5-phospho-1-deoxy-D-ribulos-1-ylimino)methylamino]-1-(5-phospho-beta-D-ribosyl)imidazole-4-carboxamide. It participates in amino-acid biosynthesis; L-histidine biosynthesis; L-histidine from 5-phospho-alpha-D-ribose 1-diphosphate: step 4/9. This is 1-(5-phosphoribosyl)-5-[(5-phosphoribosylamino)methylideneamino] imidazole-4-carboxamide isomerase from Burkholderia pseudomallei (strain 1710b).